The sequence spans 76 residues: Small ribosomal subunit protein bS18 (76 aa).

The protein belongs to the bacterial ribosomal protein bS18 family. In terms of assembly, part of the 30S ribosomal subunit. Forms a tight heterodimer with protein bS6.

In terms of biological role, binds as a heterodimer with protein bS6 to the central domain of the 16S rRNA, where it helps stabilize the platform of the 30S subunit. The sequence is that of Small ribosomal subunit protein bS18 from Mesoplasma florum (strain ATCC 33453 / NBRC 100688 / NCTC 11704 / L1) (Acholeplasma florum).